Consider the following 1048-residue polypeptide: uncharacterized protein (1048 aa).

Residues 601–629 (ENQINEEQQTNVENEQQTEQQFENEDKET) are disordered. Residues 605-621 (NEEQQTNVENEQQTEQQ) show a composition bias toward low complexity.

This is an uncharacterized protein from Methanocaldococcus jannaschii (strain ATCC 43067 / DSM 2661 / JAL-1 / JCM 10045 / NBRC 100440) (Methanococcus jannaschii).